Reading from the N-terminus, the 189-residue chain is CDP-archaeol synthase (189 aa).

5 helical membrane-spanning segments follow: residues 6–26 (VAIAVWAMLPAYVPNNVAVLA), 71–91 (GVVLALLLNQLQPFVAGTVGV), 96–116 (IAAAVALAFGAMLGDILASFL), 125–145 (GAAFPGVDQLDFVIVSLALTA), and 162–184 (VAIFVLTPVLHVSTNGLAYAFGL).

It belongs to the CDP-archaeol synthase family. Mg(2+) serves as cofactor.

The protein localises to the cell membrane. The catalysed reaction is 2,3-bis-O-(geranylgeranyl)-sn-glycerol 1-phosphate + CTP + H(+) = CDP-2,3-bis-O-(geranylgeranyl)-sn-glycerol + diphosphate. The protein operates within membrane lipid metabolism; glycerophospholipid metabolism. In terms of biological role, catalyzes the formation of CDP-2,3-bis-(O-geranylgeranyl)-sn-glycerol (CDP-archaeol) from 2,3-bis-(O-geranylgeranyl)-sn-glycerol 1-phosphate (DGGGP) and CTP. This reaction is the third ether-bond-formation step in the biosynthesis of archaeal membrane lipids. The chain is CDP-archaeol synthase from Natronomonas pharaonis (strain ATCC 35678 / DSM 2160 / CIP 103997 / JCM 8858 / NBRC 14720 / NCIMB 2260 / Gabara) (Halobacterium pharaonis).